Consider the following 155-residue polypeptide: Small ribosomal subunit protein uS7 (155 aa).

It belongs to the universal ribosomal protein uS7 family. As to quaternary structure, part of the 30S ribosomal subunit. Contacts proteins S9 and S11.

Functionally, one of the primary rRNA binding proteins, it binds directly to 16S rRNA where it nucleates assembly of the head domain of the 30S subunit. Is located at the subunit interface close to the decoding center, probably blocks exit of the E-site tRNA. The protein is Small ribosomal subunit protein uS7 of Amoebophilus asiaticus (strain 5a2).